Reading from the N-terminus, the 351-residue chain is Phospho-N-acetylmuramoyl-pentapeptide-transferase (351 aa).

The next 10 helical transmembrane spans lie at 17-37 (TAYATIFAFLLALIFGPFIIL), 63-83 (IPTMGGILIFFCVLVSLFFWI), 85-105 (LWNVYFLIVLFVMISFACLGF), 135-155 (ISVTMLYYFGGEHISIIYFPF), 158-178 (SLKLDLGVLYIPFGMFILISA), 190-210 (GLAIGLSIVVTGALVIIAYLT), 230-250 (LVIFLGALLGGSFGFLWFNAY), 254-274 (IMMGDTGSLSIGAVLGMTALI), 279-299 (ILFAILAGVFVLETLSVIIQV), and 328-348 (QVVIRFWIIGLIFAIIALSTL).

It belongs to the glycosyltransferase 4 family. MraY subfamily. The cofactor is Mg(2+).

The protein resides in the cell inner membrane. It carries out the reaction UDP-N-acetyl-alpha-D-muramoyl-L-alanyl-gamma-D-glutamyl-meso-2,6-diaminopimeloyl-D-alanyl-D-alanine + di-trans,octa-cis-undecaprenyl phosphate = di-trans,octa-cis-undecaprenyl diphospho-N-acetyl-alpha-D-muramoyl-L-alanyl-D-glutamyl-meso-2,6-diaminopimeloyl-D-alanyl-D-alanine + UMP. The protein operates within cell wall biogenesis; peptidoglycan biosynthesis. In terms of biological role, catalyzes the initial step of the lipid cycle reactions in the biosynthesis of the cell wall peptidoglycan: transfers peptidoglycan precursor phospho-MurNAc-pentapeptide from UDP-MurNAc-pentapeptide onto the lipid carrier undecaprenyl phosphate, yielding undecaprenyl-pyrophosphoryl-MurNAc-pentapeptide, known as lipid I. The polypeptide is Phospho-N-acetylmuramoyl-pentapeptide-transferase (Borrelia hermsii (strain HS1 / DAH)).